We begin with the raw amino-acid sequence, 394 residues long: Ornithine aminotransferase 1 (394 aa).

K252 is subject to N6-(pyridoxal phosphate)lysine.

Belongs to the class-III pyridoxal-phosphate-dependent aminotransferase family. OAT subfamily. Requires pyridoxal 5'-phosphate as cofactor.

Its subcellular location is the cytoplasm. The enzyme catalyses a 2-oxocarboxylate + L-ornithine = L-glutamate 5-semialdehyde + an L-alpha-amino acid. It functions in the pathway amino-acid biosynthesis; L-proline biosynthesis; L-glutamate 5-semialdehyde from L-ornithine: step 1/1. Functionally, catalyzes the interconversion of ornithine to glutamate semialdehyde. The polypeptide is Ornithine aminotransferase 1 (Staphylococcus aureus (strain MRSA252)).